The sequence spans 871 residues: Serrate RNA effector molecule homolog (871 aa).

The segment at 1–90 (MGDSDDEYDR…RRDWDGHSSD (90 aa)) is disordered. The residue at position 2 (glycine 2) is an N-acetylglycine. At serine 4 the chain carries Phosphoserine. Phosphotyrosine is present on tyrosine 8. A compositionally biased stretch (basic and acidic residues) spans 8 to 73 (YDRRRRDKFR…ERFSPPRHEL (66 aa)). Residues serine 67, serine 74, and serine 136 each carry the phosphoserine modification. Residue lysine 150 forms a Glycyl lysine isopeptide (Lys-Gly) (interchain with G-Cter in SUMO2) linkage. Positions 272-411 (EEEEQAGKPG…KPKDAAGLEC (140 aa)) are disordered. The span at 297-347 (DGERKTNDKDEKKEDSKQAENDSSNDDKTKKSEGDGDKEEKKEDSEKEAKK) shows a compositional bias: basic and acidic residues. Residues 370–385 (SESESESGQAEEEKEE) are compositionally biased toward acidic residues. Positions 386-411 (AEALKEKEKPKEEEWEKPKDAAGLEC) are enriched in basic and acidic residues. Phosphoserine occurs at positions 492 and 539. Threonine 543 bears the Phosphothreonine mark. Serine 569 is subject to Phosphoserine. The tract at residues 574–597 (ELLGSSGGAPPEEPPKEGNPAEIN) is disordered. Phosphothreonine is present on threonine 670. Serine 678 carries the post-translational modification Phosphoserine. 3 positions are modified to omega-N-methylarginine: arginine 828, arginine 835, and arginine 845. A disordered region spans residues 830–849 (NYDAFRGQGGYPGKPRNRMV).

It belongs to the ARS2 family. Interacts with CASP8AP2, ERBB4, NCBP1/CBP80 and DROSHA. Interacts with LUZP4. Interacts with NCBP2/CBP20 and NCBP3. Interacts with MTREX.

It is found in the nucleus. The protein localises to the nucleoplasm. Its subcellular location is the cytoplasm. Its function is as follows. Acts as a mediator between the cap-binding complex (CBC) and the primary microRNAs (miRNAs) processing machinery during cell proliferation. Contributes to the stability and delivery of capped primary miRNA transcripts to the primary miRNA processing complex containing DGCR8 and DROSHA, thereby playing a role in RNA-mediated gene silencing (RNAi) by miRNAs. Binds capped RNAs (m7GpppG-capped RNA); however interaction is probably mediated via its interaction with NCBP1/CBP80 component of the CBC complex. Involved in cell cycle progression at S phase. Does not directly confer arsenite resistance but rather modulates arsenic sensitivity. Independently of its activity on miRNAs, necessary and sufficient to promote neural stem cell self-renewal. Does so by directly binding SOX2 promoter and positively regulating its transcription. The sequence is that of Serrate RNA effector molecule homolog (SRRT) from Pongo abelii (Sumatran orangutan).